We begin with the raw amino-acid sequence, 239 residues long: Ribonuclease HII (239 aa).

Residues Gly30–Gly221 enclose the RNase H type-2 domain. A divalent metal cation-binding residues include Asp36, Glu37, and Asp130.

Belongs to the RNase HII family. Mn(2+) is required as a cofactor. Requires Mg(2+) as cofactor.

Its subcellular location is the cytoplasm. The enzyme catalyses Endonucleolytic cleavage to 5'-phosphomonoester.. Functionally, endonuclease that specifically degrades the RNA of RNA-DNA hybrids. This is Ribonuclease HII from Mycolicibacterium paratuberculosis (strain ATCC BAA-968 / K-10) (Mycobacterium paratuberculosis).